The following is a 423-amino-acid chain: UDP-N-acetylglucosamine 1-carboxyvinyltransferase 1 (423 aa).

24–25 (KN) is a binding site for phosphoenolpyruvate. Residue R94 coordinates UDP-N-acetyl-alpha-D-glucosamine. C118 functions as the Proton donor in the catalytic mechanism. C118 bears the 2-(S-cysteinyl)pyruvic acid O-phosphothioketal mark. Residues 123 to 127 (RPIDQ), D309, and I331 each bind UDP-N-acetyl-alpha-D-glucosamine.

The protein belongs to the EPSP synthase family. MurA subfamily.

It is found in the cytoplasm. The catalysed reaction is phosphoenolpyruvate + UDP-N-acetyl-alpha-D-glucosamine = UDP-N-acetyl-3-O-(1-carboxyvinyl)-alpha-D-glucosamine + phosphate. The protein operates within cell wall biogenesis; peptidoglycan biosynthesis. Its function is as follows. Cell wall formation. Adds enolpyruvyl to UDP-N-acetylglucosamine. The sequence is that of UDP-N-acetylglucosamine 1-carboxyvinyltransferase 1 from Staphylococcus haemolyticus (strain JCSC1435).